The following is a 503-amino-acid chain: Probable voltage-gated potassium channel subunit kvs-4 (503 aa).

At 1–231 (MNSAIMQGAA…EPASSGKAQA (231 aa)) the chain is on the cytoplasmic side. A Required for dendritic localization motif is present at residues 217 to 219 (WNI). The chain crosses the membrane as a helical span at residues 232–252 (FAVCSVVFVLISISGLVLGSL). Topologically, residues 253–275 (PELQVATKQRNNLTGEEFTEMEP) are extracellular. N-linked (GlcNAc...) asparagine glycosylation occurs at Asn-264. A helical transmembrane segment spans residues 276-296 (MPILGYIEYVCIVWFTMEYGL). The Cytoplasmic portion of the chain corresponds to 297-313 (KMLVSAERSKTFRQLLN). A helical transmembrane segment spans residues 314–334 (IIDLLAILPFIIEMLLLIFGI). The Extracellular segment spans residues 335–346 (STEQLRDLKGAF). A helical; Voltage-sensor transmembrane segment spans residues 347 to 366 (LVIRILRVLRVIRVLKLGRY). The Cytoplasmic segment spans residues 367 to 383 (SSGLQMFGKTLKASFRQ). The interval 368 to 383 (SGLQMFGKTLKASFRQ) is S4-S5 linker. A helical membrane pass occupies residues 384-404 (LGMMAMVVMTGVIFFSTLVYF). Residues 405 to 417 (LEKDEPASKFHSI) are Extracellular-facing. Residues 418 to 429 (PAACWWCIVTMT) constitute an intramembrane region (helical). Residues 430–434 (TVGYG) lie within the membrane without spanning it. Positions 430-435 (TVGYGD) match the Selectivity filter motif. Topologically, residues 435-445 (DLTPVTVPGKL) are extracellular. The chain crosses the membrane as a helical span at residues 446–466 (VATGAIACGVLVLALPITIIV). Topologically, residues 467–503 (DNFMKVAETERPAGGNRYRTSQYPKATKSEQMILKVT) are cytoplasmic. The Required for dendritic localization motif lies at 496–500 (EQMIL).

Belongs to the potassium channel family. B (Shab) (TC 1.A.1.2) subfamily. Kv2.2/KCNB2 sub-subfamily. Homotetramer or heterotetramer. Interacts with unc-101 (via N-terminus); which targets kvs-4 to dendrites. Expressed in the cholinergic motor neuron DA9, mechanosensory neurons ALM and PLM, and the interneuron PVPL.

It is found in the cell membrane. The protein resides in the perikaryon. The protein localises to the cell projection. Its subcellular location is the axon. It localises to the dendrite. Functionally, voltage-gated potassium channel that mediates transmembrane potassium transport in excitable membranes. The protein is Probable voltage-gated potassium channel subunit kvs-4 of Caenorhabditis elegans.